The chain runs to 271 residues: Tritrans,polycis-undecaprenyl-diphosphate synthase (geranylgeranyl-diphosphate specific) (271 aa).

D50 is a catalytic residue. Residue D50 participates in Mg(2+) binding. Residues 51-54 (GNRR), F55, H67, and 95-97 (STE) contribute to the substrate site. N98 (proton acceptor) is an active-site residue. Substrate contacts are provided by residues R101, R220, and 226 to 228 (RLS). A Mg(2+)-binding site is contributed by E239.

It belongs to the UPP synthase family. In terms of assembly, homodimer. The cofactor is Mg(2+).

It catalyses the reaction geranylgeranyl diphosphate + 7 isopentenyl diphosphate = tri-trans,hepta-cis-undecaprenyl diphosphate + 7 diphosphate. Its function is as follows. Catalyzes the sequential condensation of isopentenyl diphosphate (IPP) with geranylgeranyl diphosphate (GGPP) to yield (2Z,6Z,10Z,14Z,18Z,22Z,26Z,30E,34E,38E)-undecaprenyl diphosphate (tritrans,heptacis-UPP). It is probably the precursor of glycosyl carrier lipids. The protein is Tritrans,polycis-undecaprenyl-diphosphate synthase (geranylgeranyl-diphosphate specific) of Methanopyrus kandleri (strain AV19 / DSM 6324 / JCM 9639 / NBRC 100938).